The chain runs to 636 residues: Transcription termination factor FttA (636 aa).

The segment at 3–70 (SEMLEEIKRT…IIIRSDRSVL (68 aa)) is KHa. The segment at 71–138 (MDPEKAIRKI…WAPKILRTPP (68 aa)) is KHb. A metallo-beta-lactamase N-terminus region spans residues 179-383 (WARLTAMGGF…LVMESTYGGH (205 aa)). The Zn(2+) site is built by His242, His244, Asp246, His247, His329, and Asp352. Residues 384–577 (EDVQPSRNRA…MNIKTIEGFS (194 aa)) are beta-Casp. Positions 578–636 (GHSDRRQLMEYVKRISPKPEKILLCHGDNYKTLDLASSIYRTYRIETKTPLNLETVRIQ) are metallo-beta-lactamase C-terminus. His603 serves as a coordination point for Zn(2+).

The protein belongs to the metallo-beta-lactamase superfamily. RNA-metabolizing metallo-beta-lactamase-like family. FttA subfamily. In terms of assembly, homodimer. Interacts with RNA polymerase (RNAP), interacts with the Spt4-Spt5 complex. Does not seem to interact with the RNA degrading exosome. Requires Zn(2+) as cofactor.

With respect to regulation, most active at 0.5 M or 0.7 M NaCl, less active at 1.0 M NaCl. Nuclease activity is inhibited by N,N,Tetrakis-(2-pyridylmethyl)-ethylene diamine (TPEN), a specific chelator of zinc ions. Terminates transcription on the whole genome. Termination is linked to FttA-mediated RNA cleavage and does not require NTP hydrolysis. Cleaves endonucleolytically at the RNA exit channel of RNA polymerase (RNAP); the 5'-3' exonuclease activity of this protein degrades the nascent RNA released from RNAP. In terms of biological role, an RNA nuclease, it bind single-stranded RNA (ssRNA) with a preference for U-rich sequences. In Methanothermobacter thermautotrophicus (strain ATCC 29096 / DSM 1053 / JCM 10044 / NBRC 100330 / Delta H) (Methanobacterium thermoautotrophicum), this protein is Transcription termination factor FttA.